Consider the following 238-residue polypeptide: MVHLRRSLAPYWWPIPRKAGGVWVVKPSPGPHSFAYSLPLAIVIRDVLRYAKTLREARYIVSRGYIKVDGVVRKDYRFPVGLMDVIEIVPTGEVYRVVPDQDRYYNLLPIPSSEASLKLLRVEGKTTVNGGRLQLHFHDGRNLITSPDMGAKIKTFDTILYDLENKTIKTHIPMKLGVVAVVTHGSNVGFSGKLYEIVWTLKRRQSVVGLKKGEEVRRTILDYIMAVGEESPVIKITP.

The S4 RNA-binding domain occupies 38–100 (LPLAIVIRDV…TGEVYRVVPD (63 aa)).

This sequence belongs to the eukaryotic ribosomal protein eS4 family.

The sequence is that of Small ribosomal subunit protein eS4 from Pyrobaculum arsenaticum (strain DSM 13514 / JCM 11321 / PZ6).